A 181-amino-acid chain; its full sequence is uncharacterized protein (181 aa).

Residues 25–47 (ELANEVSAGDEEPYDDDIWESED) form a disordered region. Residues 32 to 47 (AGDEEPYDDDIWESED) are compositionally biased toward acidic residues. A helical transmembrane segment spans residues 149 to 169 (ILTLILLSCGLLMLFIGYPIL).

Its subcellular location is the cytoplasm. It localises to the membrane. This is an uncharacterized protein from Schizosaccharomyces pombe (strain 972 / ATCC 24843) (Fission yeast).